The sequence spans 519 residues: uncharacterized protein (519 aa).

Helical transmembrane passes span 37–57, 82–102, 114–134, 146–166, 175–195, 209–229, 240–260, 269–289, 309–329, 337–357, 373–393, 402–422, 434–454, and 475–495; these read ISMS…AQLM, GQLS…ILIA, MFVL…FSYY, ALTG…LGRV, LIFA…SVFS, WTTA…IPHI, FDYL…FSWN, VPYV…FVLV, CVLI…YYLW, FATP…GCAA, IMVV…TAPI, FVSI…ATLM, IAAS…LGIA, and AWYM…LTVF.

It belongs to the major facilitator superfamily.

The protein localises to the endoplasmic reticulum. It is found in the membrane. This is an uncharacterized protein from Schizosaccharomyces pombe (strain 972 / ATCC 24843) (Fission yeast).